The sequence spans 399 residues: Phosphoglycerate kinase (399 aa).

Substrate contacts are provided by residues Asp-21–Asn-23, Arg-36, His-59–Arg-62, Arg-120, and Arg-158. Residues Lys-209, Gly-297, Glu-328, and Gly-355 to Ser-358 contribute to the ATP site.

Belongs to the phosphoglycerate kinase family. Monomer.

Its subcellular location is the cytoplasm. It carries out the reaction (2R)-3-phosphoglycerate + ATP = (2R)-3-phospho-glyceroyl phosphate + ADP. Its pathway is carbohydrate degradation; glycolysis; pyruvate from D-glyceraldehyde 3-phosphate: step 2/5. This is Phosphoglycerate kinase from Streptococcus suis (strain 05ZYH33).